Consider the following 781-residue polypeptide: Chloride channel protein CLC-f (781 aa).

Disordered regions lie at residues Met1 to Ala41 and Arg79 to Gly98. Basic and acidic residues predominate over residues Asn10–Asp20. 12 consecutive transmembrane segments (helical) span residues Trp129–Phe149, Ile184–Ile204, Phe221–Gly241, Ser250–Glu270, Gly279–Ile299, Phe314–Leu334, Ala350–Phe370, Phe388–Leu408, Ala433–Cys453, Gly457–Phe477, Ala502–Leu522, and Leu523–Leu543. A disordered region spans residues Gln553–Arg584. Over residues Ser575–Arg584 the composition is skewed to basic and acidic residues. CBS domains follow at residues Met621–Thr677 and Gln699–Arg763. Residues Gln726–Gly746 form a helical membrane-spanning segment.

The protein belongs to the chloride channel (TC 2.A.49) family. As to quaternary structure, homodimer.

Its subcellular location is the membrane. Voltage-gated chloride channel. The sequence is that of Chloride channel protein CLC-f (CLC-F) from Arabidopsis thaliana (Mouse-ear cress).